Reading from the N-terminus, the 122-residue chain is NADH-quinone oxidoreductase subunit A (122 aa).

The next 3 helical transmembrane spans lie at 12–32 (ILLF…AGWL), 67–87 (IAIL…WAVV), and 91–111 (IGWF…VGFI).

This sequence belongs to the complex I subunit 3 family. NDH-1 is composed of 14 different subunits. Subunits NuoA, H, J, K, L, M, N constitute the membrane sector of the complex.

The protein resides in the cell inner membrane. The catalysed reaction is a quinone + NADH + 5 H(+)(in) = a quinol + NAD(+) + 4 H(+)(out). NDH-1 shuttles electrons from NADH, via FMN and iron-sulfur (Fe-S) centers, to quinones in the respiratory chain. The immediate electron acceptor for the enzyme in this species is believed to be ubiquinone. Couples the redox reaction to proton translocation (for every two electrons transferred, four hydrogen ions are translocated across the cytoplasmic membrane), and thus conserves the redox energy in a proton gradient. In Nitrosomonas europaea (strain ATCC 19718 / CIP 103999 / KCTC 2705 / NBRC 14298), this protein is NADH-quinone oxidoreductase subunit A.